The sequence spans 512 residues: Hyaluronidase PH-20 (512 aa).

The N-terminal stretch at 1 to 35 (MGELQFKWLFWRSFAESGGTFQTVLIFLFIPYSLT) is a signal peptide. Intrachain disulfides connect Cys60–Cys351 and Cys223–Cys237. The N-linked (GlcNAc...) asparagine glycan is linked to Asn63. Glu147 serves as the catalytic Proton donor. N-linked (GlcNAc...) asparagine glycosylation is found at Asn165 and Asn179. The N-linked (GlcNAc...) asparagine glycan is linked to Asn368. 3 cysteine pairs are disulfide-bonded: Cys376–Cys387, Cys381–Cys435, and Cys437–Cys464. An N-linked (GlcNAc...) asparagine glycan is attached at Asn408.

The protein belongs to the glycosyl hydrolase 56 family.

Its subcellular location is the cell membrane. The enzyme catalyses Random hydrolysis of (1-&gt;4)-linkages between N-acetyl-beta-D-glucosamine and D-glucuronate residues in hyaluronate.. In terms of biological role, involved in sperm-egg adhesion. Upon fertilization sperm must first penetrate a layer of cumulus cells that surrounds the egg before reaching the zona pellucida. The cumulus cells are embedded in a matrix containing hyaluronic acid which is formed prior to ovulation. This protein aids in penetrating the layer of cumulus cells by digesting hyaluronic acid. This is Hyaluronidase PH-20 (Spam1) from Rattus norvegicus (Rat).